Consider the following 102-residue polypeptide: Nucleoid-associated protein WIGBR5260 (102 aa).

Belongs to the YbaB/EbfC family. Homodimer.

It localises to the cytoplasm. The protein localises to the nucleoid. In terms of biological role, binds to DNA and alters its conformation. May be involved in regulation of gene expression, nucleoid organization and DNA protection. In Wigglesworthia glossinidia brevipalpis, this protein is Nucleoid-associated protein WIGBR5260.